The chain runs to 363 residues: Phosphoserine aminotransferase (363 aa).

Residue R42 participates in L-glutamate binding. Pyridoxal 5'-phosphate-binding positions include 76-77 (GR), W102, T156, D175, and Q198. K199 carries the post-translational modification N6-(pyridoxal phosphate)lysine. 240 to 241 (NT) lines the pyridoxal 5'-phosphate pocket.

The protein belongs to the class-V pyridoxal-phosphate-dependent aminotransferase family. SerC subfamily. As to quaternary structure, homodimer. Pyridoxal 5'-phosphate is required as a cofactor.

The protein resides in the cytoplasm. The catalysed reaction is O-phospho-L-serine + 2-oxoglutarate = 3-phosphooxypyruvate + L-glutamate. The enzyme catalyses 4-(phosphooxy)-L-threonine + 2-oxoglutarate = (R)-3-hydroxy-2-oxo-4-phosphooxybutanoate + L-glutamate. It functions in the pathway amino-acid biosynthesis; L-serine biosynthesis; L-serine from 3-phospho-D-glycerate: step 2/3. Its pathway is cofactor biosynthesis; pyridoxine 5'-phosphate biosynthesis; pyridoxine 5'-phosphate from D-erythrose 4-phosphate: step 3/5. Catalyzes the reversible conversion of 3-phosphohydroxypyruvate to phosphoserine and of 3-hydroxy-2-oxo-4-phosphonooxybutanoate to phosphohydroxythreonine. The polypeptide is Phosphoserine aminotransferase (Shewanella sp. (strain MR-4)).